Consider the following 364-residue polypeptide: tRNA 2-selenouridine synthase (364 aa).

The region spanning 14-137 (LIADTPIIDV…LRQTAIQATI (124 aa)) is the Rhodanese domain. Catalysis depends on Cys-97, which acts as the S-selanylcysteine intermediate.

The protein belongs to the SelU family. Monomer.

It carries out the reaction 5-methylaminomethyl-2-thiouridine(34) in tRNA + selenophosphate + (2E)-geranyl diphosphate + H2O + H(+) = 5-methylaminomethyl-2-selenouridine(34) in tRNA + (2E)-thiogeraniol + phosphate + diphosphate. The enzyme catalyses 5-methylaminomethyl-2-thiouridine(34) in tRNA + (2E)-geranyl diphosphate = 5-methylaminomethyl-S-(2E)-geranyl-thiouridine(34) in tRNA + diphosphate. It catalyses the reaction 5-methylaminomethyl-S-(2E)-geranyl-thiouridine(34) in tRNA + selenophosphate + H(+) = 5-methylaminomethyl-2-(Se-phospho)selenouridine(34) in tRNA + (2E)-thiogeraniol. The catalysed reaction is 5-methylaminomethyl-2-(Se-phospho)selenouridine(34) in tRNA + H2O = 5-methylaminomethyl-2-selenouridine(34) in tRNA + phosphate. In terms of biological role, involved in the post-transcriptional modification of the uridine at the wobble position (U34) of tRNA(Lys), tRNA(Glu) and tRNA(Gln). Catalyzes the conversion of 2-thiouridine (S2U-RNA) to 2-selenouridine (Se2U-RNA). Acts in a two-step process involving geranylation of 2-thiouridine (S2U) to S-geranyl-2-thiouridine (geS2U) and subsequent selenation of the latter derivative to 2-selenouridine (Se2U) in the tRNA chain. The chain is tRNA 2-selenouridine synthase from Shigella boydii serotype 18 (strain CDC 3083-94 / BS512).